The chain runs to 327 residues: Tetraacyldisaccharide 4'-kinase (327 aa).

ATP is bound at residue 52–59 (TAGGAGKT).

It belongs to the LpxK family.

The enzyme catalyses a lipid A disaccharide + ATP = a lipid IVA + ADP + H(+). It functions in the pathway glycolipid biosynthesis; lipid IV(A) biosynthesis; lipid IV(A) from (3R)-3-hydroxytetradecanoyl-[acyl-carrier-protein] and UDP-N-acetyl-alpha-D-glucosamine: step 6/6. Transfers the gamma-phosphate of ATP to the 4'-position of a tetraacyldisaccharide 1-phosphate intermediate (termed DS-1-P) to form tetraacyldisaccharide 1,4'-bis-phosphate (lipid IVA). The sequence is that of Tetraacyldisaccharide 4'-kinase from Gluconacetobacter diazotrophicus (strain ATCC 49037 / DSM 5601 / CCUG 37298 / CIP 103539 / LMG 7603 / PAl5).